A 651-amino-acid polypeptide reads, in one-letter code: ATP synthase F(1) complex catalytic subunit beta, mitochondrial (651 aa).

The N-terminal 30 residues, 1-30 (MFVARRLSKNITQISKTAVKTSVRAVPVRG), are a transit peptide targeting the mitochondrion. ADP-binding residues include glycine 259, valine 260, glycine 261, lysine 262, threonine 263, and valine 264. Glycine 259 is an ATP binding site. Residues glycine 259, valine 260, glycine 261, lysine 262, and threonine 263 each coordinate phosphate. ATP is bound by residues glycine 261, lysine 262, threonine 263, and valine 264. Residue threonine 263 participates in Mg(2+) binding. Glutamate 288 lines the Mg(2+) pocket. Arginine 289 is an ATP binding site.

The protein belongs to the ATPase alpha/beta chains family. As to quaternary structure, homotrimer. Component of the ATP synthase complex composed at least of ATP5F1A/subunit alpha, ATP5F1B/subunit beta, ATP5MC1/subunit c (homooctomer), MT-ATP6/subunit a, MT-ATP8/subunit 8, ATP5ME/subunit e, ATP5MF/subunit f, ATP5MG/subunit g, ATP5MK/subunit k, ATP5MJ/subunit j, ATP5F1C/subunit gamma, ATP5F1D/subunit delta, ATP5F1E/subunit epsilon, ATP5PF/subunit F6, ATP5PB/subunit b, ATP5PD/subunit d, ATP5PO/subunit OSCP. ATP synthase complex consists of a soluble F(1) head domain (subunits alpha(3) and beta(3)) - the catalytic core - and a membrane F(0) domain - the membrane proton channel (subunits c, a, 8, e, f, g, k and j). These two domains are linked by a central stalk (subunits gamma, delta, and epsilon) rotating inside the F1 region and a stationary peripheral stalk (subunits F6, b, d, and OSCP).

Its subcellular location is the mitochondrion inner membrane. The catalysed reaction is ATP + H2O + 4 H(+)(in) = ADP + phosphate + 5 H(+)(out). In terms of biological role, catalytic subunit beta, of the mitochondrial membrane ATP synthase complex (F(1)F(0) ATP synthase or Complex V) that produces ATP from ADP in the presence of a proton gradient across the membrane which is generated by electron transport complexes of the respiratory chain. ATP synthase complex consist of a soluble F(1) head domain - the catalytic core - and a membrane F(1) domain - the membrane proton channel. These two domains are linked by a central stalk rotating inside the F(1) region and a stationary peripheral stalk. During catalysis, ATP synthesis in the catalytic domain of F(1) is coupled via a rotary mechanism of the central stalk subunits to proton translocation. In vivo, can only synthesize ATP although its ATP hydrolase activity can be activated artificially in vitro. With the subunit alpha (ATP5F1A), forms the catalytic core in the F(1) domain. In Dictyostelium discoideum (Social amoeba), this protein is ATP synthase F(1) complex catalytic subunit beta, mitochondrial.